The primary structure comprises 407 residues: Argininosuccinate synthase (407 aa).

ATP contacts are provided by residues 11–19 (AYSGGLDTS) and Ala38. The L-citrulline site is built by Tyr91 and Ser96. An ATP-binding site is contributed by Gly121. Residues Thr123, Asn127, and Asp128 each contribute to the L-aspartate site. Asn127 serves as a coordination point for L-citrulline. Residues Arg131, Ser181, Ser190, Glu266, and Tyr278 each coordinate L-citrulline.

The protein belongs to the argininosuccinate synthase family. Type 1 subfamily. Homotetramer.

It is found in the cytoplasm. It carries out the reaction L-citrulline + L-aspartate + ATP = 2-(N(omega)-L-arginino)succinate + AMP + diphosphate + H(+). It participates in amino-acid biosynthesis; L-arginine biosynthesis; L-arginine from L-ornithine and carbamoyl phosphate: step 2/3. This is Argininosuccinate synthase from Campylobacter concisus (strain 13826).